A 160-amino-acid polypeptide reads, in one-letter code: Cytochrome b6-f complex subunit 4 (160 aa).

The next 3 membrane-spanning stretches (helical) occupy residues 36–56, 95–115, and 131–151; these read LLYI…GLAV, LLGI…PFIE, and AFFL…CLPI.

The protein belongs to the cytochrome b family. PetD subfamily. As to quaternary structure, the 4 large subunits of the cytochrome b6-f complex are cytochrome b6, subunit IV (17 kDa polypeptide, PetD), cytochrome f and the Rieske protein, while the 4 small subunits are PetG, PetL, PetM and PetN. The complex functions as a dimer.

It is found in the cellular thylakoid membrane. Component of the cytochrome b6-f complex, which mediates electron transfer between photosystem II (PSII) and photosystem I (PSI), cyclic electron flow around PSI, and state transitions. The protein is Cytochrome b6-f complex subunit 4 of Prochlorococcus marinus (strain SARG / CCMP1375 / SS120).